Reading from the N-terminus, the 280-residue chain is Golgi phosphoprotein 3-like A (280 aa).

A disordered region spans residues 1 to 32; it reads MTTLIRRGRRAEEGQERRADSEDSIKDKDEEE. Residues 10–32 show a composition bias toward basic and acidic residues; sequence RAEEGQERRADSEDSIKDKDEEE. The a 1,2-diacyl-sn-glycero-3-phospho-(1D-myo-inositol 4-phosphate) site is built by tryptophan 62, arginine 71, arginine 152, and arginine 155. The beta-hairpin required for oligomerization stretch occupies residues 171–182; the sequence is EKQNFLLFDMTT.

Belongs to the GOLPH3/VPS74 family. As to quaternary structure, homooligomer.

It localises to the golgi apparatus. The protein resides in the golgi stack membrane. The protein localises to the trans-Golgi network membrane. Phosphatidylinositol-4-phosphate-binding protein that may play a role in the process of vesicle budding at the Golgi and anterograde transport to the plasma membrane. This chain is Golgi phosphoprotein 3-like A (golph3l-a), found in Xenopus laevis (African clawed frog).